Here is a 728-residue protein sequence, read N- to C-terminus: 1,4-alpha-glucan branching enzyme GlgB (728 aa).

Asp405 functions as the Nucleophile in the catalytic mechanism. The active-site Proton donor is the Glu458. Residues 686 to 712 (YHGSNAGNAGAVQSDEHESHGRPHSLS) are disordered.

It belongs to the glycosyl hydrolase 13 family. GlgB subfamily. Monomer.

It catalyses the reaction Transfers a segment of a (1-&gt;4)-alpha-D-glucan chain to a primary hydroxy group in a similar glucan chain.. Its pathway is glycan biosynthesis; glycogen biosynthesis. Catalyzes the formation of the alpha-1,6-glucosidic linkages in glycogen by scission of a 1,4-alpha-linked oligosaccharide from growing alpha-1,4-glucan chains and the subsequent attachment of the oligosaccharide to the alpha-1,6 position. This chain is 1,4-alpha-glucan branching enzyme GlgB, found in Enterobacter sp. (strain 638).